A 555-amino-acid polypeptide reads, in one-letter code: MLRHAIETNVQIFTKFLVISASAVGIGYARKLFDQRPQRDDSFLSNSMIKAYLETRQYPDSFALYRDLRKETCFAPDNFTFTTLTKSCSLSMCVYQGLQLHSQIWRFGFCADMYVSTGVVDMYAKFGKMGCARNAFDEMPHRSEVSWTALISGYIRCGELDLASKLFDQMPHVKDVVIYNAMMDGFVKSGDMTSARRLFDEMTHKTVITWTTMIHGYCNIKDIDAARKLFDAMPERNLVSWNTMIGGYCQNKQPQEGIRLFQEMQATTSLDPDDVTILSVLPAISDTGALSLGEWCHCFVQRKKLDKKVKVCTAILDMYSKCGEIEKAKRIFDEMPEKQVASWNAMIHGYALNGNARAALDLFVTMMIEEKPDEITMLAVITACNHGGLVEEGRKWFHVMREMGLNAKIEHYGCMVDLLGRAGSLKEAEDLITNMPFEPNGIILSSFLSACGQYKDIERAERILKKAVELEPQNDGNYVLLRNLYAADKRWDDFGMVKNVMRKNQAKKEVGCSLIEINYIVSEFISGDTTHPHRRSIHLVLGDLLMHMNEEKYNW.

12 PPR repeats span residues D41–A75, D77–A111, D112–R142, S143–V173, D175–K205, T206–S240, W241–T267, D273–K307, K308–S342, W343–E370, D373–A407, and K408–E438. The interval I443 to N518 is type E motif. The segment at Y519–N549 is type E(+) motif.

Belongs to the PPR family. PCMP-E subfamily.

This chain is Pentatricopeptide repeat-containing protein At2g44880 (PCMP-E9), found in Arabidopsis thaliana (Mouse-ear cress).